Consider the following 122-residue polypeptide: MARIAGVDLPKKKRIEYALTYIYGIGLKTSRDILSAVNISLDKRVQELSEDEVSLISKKIQESYAVEGDLRKKVTMDIKALMDLGSYRGLRHRKGLPVRGQTTKNNARTRKGKRKTVGSASK.

The tract at residues 93–122 (RKGLPVRGQTTKNNARTRKGKRKTVGSASK) is disordered. A compositionally biased stretch (basic residues) spans 107-116 (ARTRKGKRKT).

Belongs to the universal ribosomal protein uS13 family. Part of the 30S ribosomal subunit. Forms a loose heterodimer with protein S19. Forms two bridges to the 50S subunit in the 70S ribosome.

Located at the top of the head of the 30S subunit, it contacts several helices of the 16S rRNA. In the 70S ribosome it contacts the 23S rRNA (bridge B1a) and protein L5 of the 50S subunit (bridge B1b), connecting the 2 subunits; these bridges are implicated in subunit movement. Contacts the tRNAs in the A and P-sites. The sequence is that of Small ribosomal subunit protein uS13 from Wolinella succinogenes (strain ATCC 29543 / DSM 1740 / CCUG 13145 / JCM 31913 / LMG 7466 / NCTC 11488 / FDC 602W) (Vibrio succinogenes).